The sequence spans 295 residues: 4-hydroxy-tetrahydrodipicolinate synthase (295 aa).

Threonine 46 is a pyruvate binding site. Tyrosine 135 functions as the Proton donor/acceptor in the catalytic mechanism. Residue lysine 164 is the Schiff-base intermediate with substrate of the active site. Pyruvate is bound at residue isoleucine 205.

The protein belongs to the DapA family. As to quaternary structure, homotetramer; dimer of dimers.

The protein resides in the cytoplasm. It catalyses the reaction L-aspartate 4-semialdehyde + pyruvate = (2S,4S)-4-hydroxy-2,3,4,5-tetrahydrodipicolinate + H2O + H(+). The protein operates within amino-acid biosynthesis; L-lysine biosynthesis via DAP pathway; (S)-tetrahydrodipicolinate from L-aspartate: step 3/4. Functionally, catalyzes the condensation of (S)-aspartate-beta-semialdehyde [(S)-ASA] and pyruvate to 4-hydroxy-tetrahydrodipicolinate (HTPA). The polypeptide is 4-hydroxy-tetrahydrodipicolinate synthase (Wolinella succinogenes (strain ATCC 29543 / DSM 1740 / CCUG 13145 / JCM 31913 / LMG 7466 / NCTC 11488 / FDC 602W) (Vibrio succinogenes)).